The chain runs to 431 residues: MTVLTNSLTEVAQQTRQAAIQLAGASTETKNQALEAVAQALEAATPEILEANVQDCQQAKAAGIANALYARLKLDATKLKGAIAGVRSVATLEDPVGTVQLKRELDTDLVLSRVSCPLGVLGVIFEARPDAVMQIAALAMKSGNGVLLKGGQEALHSCQALVKAIHQGLSNTAVSPNVVALLTSREETLELLNLDQDVNLIIPRGSNDFVRFVQENTRIPVLGHAEGICHLYVDQAAKLDQAVEIAVDSKIQYPAACNAVETILVHDAIAPQYLPKLTAALQDNHVKVLGDAKTQAIVDVGPATETDWATEYGDLIVSIKVVASLSDAIAHINQYGSGHTDAIATEDDQAAAVFMNQVDAAGVFHNCSTRFADGFRYGFGAEVGISTQRMPPRGPVGLEGLVTYKYQLKGQGQIVATYAGSDARPFTHKDL.

Belongs to the gamma-glutamyl phosphate reductase family.

The protein localises to the cytoplasm. The catalysed reaction is L-glutamate 5-semialdehyde + phosphate + NADP(+) = L-glutamyl 5-phosphate + NADPH + H(+). The protein operates within amino-acid biosynthesis; L-proline biosynthesis; L-glutamate 5-semialdehyde from L-glutamate: step 2/2. Catalyzes the NADPH-dependent reduction of L-glutamate 5-phosphate into L-glutamate 5-semialdehyde and phosphate. The product spontaneously undergoes cyclization to form 1-pyrroline-5-carboxylate. This is Gamma-glutamyl phosphate reductase from Acaryochloris marina (strain MBIC 11017).